The following is an 890-amino-acid chain: Genome polyprotein 2 (890 aa).

One can recognise a Peptidase C6 domain in the interval 135–255 (AFNFAHGYCY…NSDLLNGIVG (121 aa)). Catalysis depends on for helper component proteinase activity residues cysteine 143 and histidine 215. A disordered region spans residues 506–533 (FTTSGDDDSPPPPGDSPSRPPGRSPDRV). The segment covering 515-528 (PPPPGDSPSRPPGR) has biased composition (pro residues). A coiled-coil region spans residues 788–816 (ELVQRSMTKLDKEIELFQAQIDSQRRAVT).

This sequence belongs to the bymoviruses polyprotein 2 family. Post-translationally, the viral RNA2 of bymoviruses is expressed as a single polyprotein which undergoes post-translational proteolytic processing resulting in the production of at least two individual proteins. The HC-pro cleaves its C-terminus autocatalytically (Potential).

It carries out the reaction Hydrolyzes a Gly-|-Gly bond at its own C-terminus, commonly in the sequence -Tyr-Xaa-Val-Gly-|-Gly, in the processing of the potyviral polyprotein.. The protein is Genome polyprotein 2 of Hordeum vulgare (Barley).